We begin with the raw amino-acid sequence, 158 residues long: MSTVITILNGPNLNFLGKREPEVYGTETLEYIEKSCQDYAKKLEFMVQCHQTNCEGQLVEWIQEAIGMSAGLIINPAAYGHTSIAIFDALKMFSGPIVEVHLSNIHRREAFRHHSYVSASADAVIVGCGHEGYLFALEYIAKQLRYGYKKRSNQTLLT.

Residue tyrosine 24 is the Proton acceptor of the active site. Asparagine 75, histidine 81, and aspartate 88 together coordinate substrate. The active-site Proton donor is the histidine 101. Substrate contacts are provided by residues 102–103 (LS) and arginine 112.

This sequence belongs to the type-II 3-dehydroquinase family. In terms of assembly, homododecamer.

It catalyses the reaction 3-dehydroquinate = 3-dehydroshikimate + H2O. The protein operates within metabolic intermediate biosynthesis; chorismate biosynthesis; chorismate from D-erythrose 4-phosphate and phosphoenolpyruvate: step 3/7. Functionally, catalyzes a trans-dehydration via an enolate intermediate. The chain is 3-dehydroquinate dehydratase from Bartonella bacilliformis (strain ATCC 35685 / KC583 / Herrer 020/F12,63).